Here is a 276-residue protein sequence, read N- to C-terminus: Dermonecrotic toxin LafSicTox-betaIE2 (276 aa).

His5 is a catalytic residue. Residues Glu25 and Asp27 each coordinate Mg(2+). His41 functions as the Nucleophile in the catalytic mechanism. 2 cysteine pairs are disulfide-bonded: Cys45–Cys51 and Cys47–Cys189. Residue Asp85 coordinates Mg(2+).

The protein belongs to the arthropod phospholipase D family. Class II subfamily. Mg(2+) is required as a cofactor. In terms of tissue distribution, expressed by the venom gland.

The protein localises to the secreted. It catalyses the reaction an N-(acyl)-sphingosylphosphocholine = an N-(acyl)-sphingosyl-1,3-cyclic phosphate + choline. The enzyme catalyses an N-(acyl)-sphingosylphosphoethanolamine = an N-(acyl)-sphingosyl-1,3-cyclic phosphate + ethanolamine. The catalysed reaction is a 1-acyl-sn-glycero-3-phosphocholine = a 1-acyl-sn-glycero-2,3-cyclic phosphate + choline. It carries out the reaction a 1-acyl-sn-glycero-3-phosphoethanolamine = a 1-acyl-sn-glycero-2,3-cyclic phosphate + ethanolamine. In terms of biological role, dermonecrotic toxins cleave the phosphodiester linkage between the phosphate and headgroup of certain phospholipids (sphingolipid and lysolipid substrates), forming an alcohol (often choline) and a cyclic phosphate. This toxin acts on sphingomyelin (SM). It may also act on ceramide phosphoethanolamine (CPE), lysophosphatidylcholine (LPC) and lysophosphatidylethanolamine (LPE), but not on lysophosphatidylserine (LPS), and lysophosphatidylglycerol (LPG). It acts by transphosphatidylation, releasing exclusively cyclic phosphate products as second products. Induces dermonecrosis, hemolysis, increased vascular permeability, edema, inflammatory response, and platelet aggregation. This chain is Dermonecrotic toxin LafSicTox-betaIE2, found in Loxosceles aff. spinulosa (strain GJB-2008) (Recluse spider).